The chain runs to 233 residues: Methyltransferase srdJ (233 aa).

The tract at residues 1–32 (MFQVQTAGTRTGTSSPDTTTSEAGLGSTPPMP) is disordered. Residues 9 to 21 (TRTGTSSPDTTTS) show a composition bias toward low complexity. The S-adenosyl-L-methionine site is built by tryptophan 40, tryptophan 52, and glycine 81. The short motif at 140–146 (EISSQKY) is the Required for methyltransferase activity element.

Belongs to the methyltransferase superfamily.

Functionally, methyltransferase; part of the gene cluster that mediates the biosynthesis of sordarial, a salicylic aldehyde structurally related to the phytotoxin pyriculol. The most interesting aspect of this pathway is formation of an aromatic product from the highly reducing polyketide synthase srdA. SrdA synthesizes a reduced polyketide chain from one molecule of acetyl-CoA and five molecules of malonyl-CoA. The polyketide chain is then reductively released as an aldehyde. The oxidoreductases srdC, srdD and srdE then oxidize one of the hydroxy groups to facilitate the intramolecular aldol condensation, followed by dehydration to yield a salicylic aldehyde. This aldehyde can undergo facile reduction by endogenous reductases to yield the alcohol 1-hydroxy-2-hydroxymethyl-3-pent-1,3-dienylbenzene. The flavin-dependent srdI counteract against the propensity of the aldehydes to be reduced under physiological conditions and is responsible for reoxidizing 1-hydroxy-2-hydroxymethyl-3-pent-1,3-dienylbenzene back to the salicylic aldehyde. This salicylic aldehyde is then selectively epoxidized by the cupin-domain-containing oxidoreductase srdB to yield the epoxide, which can be hydrolyzed stereoselectively by the hydrolase srdG to give the final product sordarial. This is Methyltransferase srdJ from Neurospora crassa (strain ATCC 24698 / 74-OR23-1A / CBS 708.71 / DSM 1257 / FGSC 987).